The sequence spans 171 residues: uncharacterized protein (171 aa).

Positions 30–97 (AGRVSAAYHA…PKKGIIICAL (68 aa)) constitute an HTH gntR-type domain. A DNA-binding region (H-T-H motif) is located at residues 57–76 (EIEIARQLGMSRTPVHEAMA).

This is an uncharacterized protein from Agrobacterium vitis (Rhizobium vitis).